A 186-amino-acid chain; its full sequence is Ribosome rescue factor SmrB (186 aa).

The region spanning 99–174 is the Smr domain; sequence IDLHGLTQHQ…SDAAIIVIIE (76 aa).

The protein belongs to the SmrB family. Associates with collided ribosomes, but not with correctly translating polysomes.

Acts as a ribosome collision sensor. Detects stalled/collided disomes (pairs of ribosomes where the leading ribosome is stalled and a second ribosome has collided with it) and endonucleolytically cleaves mRNA at the 5' boundary of the stalled ribosome. Stalled/collided disomes form a new interface (primarily via the 30S subunits) that binds SmrB. Cleaved mRNA becomes available for tmRNA ligation, leading to ribosomal subunit dissociation and rescue of stalled ribosomes. This is Ribosome rescue factor SmrB from Buchnera aphidicola subsp. Acyrthosiphon pisum (strain Tuc7).